Reading from the N-terminus, the 269-residue chain is Shikimate dehydrogenase (NADP(+)) (269 aa).

Residues 17-19 (SKS) and threonine 64 contribute to the shikimate site. Residue lysine 68 is the Proton acceptor of the active site. Glutamate 80 is a binding site for NADP(+). Residues asparagine 89 and aspartate 105 each contribute to the shikimate site. NADP(+) is bound by residues 130–134 (GAGGA), 154–159 (NRTHAK), and methionine 213. A shikimate-binding site is contributed by tyrosine 215. Glycine 237 provides a ligand contact to NADP(+).

Belongs to the shikimate dehydrogenase family. Homodimer.

It catalyses the reaction shikimate + NADP(+) = 3-dehydroshikimate + NADPH + H(+). Its pathway is metabolic intermediate biosynthesis; chorismate biosynthesis; chorismate from D-erythrose 4-phosphate and phosphoenolpyruvate: step 4/7. Functionally, involved in the biosynthesis of the chorismate, which leads to the biosynthesis of aromatic amino acids. Catalyzes the reversible NADPH linked reduction of 3-dehydroshikimate (DHSA) to yield shikimate (SA). This Neisseria flavescens protein is Shikimate dehydrogenase (NADP(+)).